Consider the following 252-residue polypeptide: Methionine aminopeptidase (252 aa).

His76 is a substrate binding site. Asp93, Asp104, and His168 together coordinate a divalent metal cation. Position 175 (His175) interacts with substrate. A divalent metal cation is bound by residues Glu202 and Glu233.

The protein belongs to the peptidase M24A family. Methionine aminopeptidase type 1 subfamily. As to quaternary structure, monomer. Co(2+) is required as a cofactor. It depends on Zn(2+) as a cofactor. Requires Mn(2+) as cofactor. Fe(2+) serves as cofactor.

The catalysed reaction is Release of N-terminal amino acids, preferentially methionine, from peptides and arylamides.. Its function is as follows. Removes the N-terminal methionine from nascent proteins. The N-terminal methionine is often cleaved when the second residue in the primary sequence is small and uncharged (Met-Ala-, Cys, Gly, Pro, Ser, Thr, or Val). Requires deformylation of the N(alpha)-formylated initiator methionine before it can be hydrolyzed. In Staphylococcus aureus (strain MRSA252), this protein is Methionine aminopeptidase.